Consider the following 338-residue polypeptide: Nicotinate-nucleotide--dimethylbenzimidazole phosphoribosyltransferase (338 aa).

Glu305 serves as the catalytic Proton acceptor.

It belongs to the CobT family.

The enzyme catalyses 5,6-dimethylbenzimidazole + nicotinate beta-D-ribonucleotide = alpha-ribazole 5'-phosphate + nicotinate + H(+). It functions in the pathway nucleoside biosynthesis; alpha-ribazole biosynthesis; alpha-ribazole from 5,6-dimethylbenzimidazole: step 1/2. In terms of biological role, catalyzes the synthesis of alpha-ribazole-5'-phosphate from nicotinate mononucleotide (NAMN) and 5,6-dimethylbenzimidazole (DMB). In Novosphingobium aromaticivorans (strain ATCC 700278 / DSM 12444 / CCUG 56034 / CIP 105152 / NBRC 16084 / F199), this protein is Nicotinate-nucleotide--dimethylbenzimidazole phosphoribosyltransferase.